The primary structure comprises 204 residues: Dephospho-CoA kinase (204 aa).

Residues 3–204 (VIGLTGGIGS…DRLDLAYRAH (202 aa)) enclose the DPCK domain. 11 to 16 (GSGKSY) lines the ATP pocket.

Belongs to the CoaE family.

The protein localises to the cytoplasm. It catalyses the reaction 3'-dephospho-CoA + ATP = ADP + CoA + H(+). It functions in the pathway cofactor biosynthesis; coenzyme A biosynthesis; CoA from (R)-pantothenate: step 5/5. In terms of biological role, catalyzes the phosphorylation of the 3'-hydroxyl group of dephosphocoenzyme A to form coenzyme A. The chain is Dephospho-CoA kinase from Ralstonia nicotianae (strain ATCC BAA-1114 / GMI1000) (Ralstonia solanacearum).